Consider the following 1600-residue polypeptide: Eukaryotic translation initiation factor 4 gamma 1 (1600 aa).

The segment at 1-88 (MNKAPQPTGP…ARPGPAPHVY (88 aa)) is disordered. A compositionally biased stretch (pro residues) spans 7–24 (PTGPPPARSPGLPQPAFP). S15 bears the Phosphoserine mark. Positions 34 to 48 (STPQATQMNTPSQPR) are enriched in polar residues. A compositionally biased stretch (low complexity) spans 60–79 (PSRAQPPSSAASRVQSAAPA). Omega-N-methylarginine occurs at positions 80 and 117. Disordered regions lie at residues 173–230 (NQPP…NGES), 243–326 (SQGA…LSPE), 366–501 (ETHE…QLSQ), 507–526 (AATQ…KELN), and 541–606 (VDPA…DQWK). Residues 179–207 (APKRERKTIRIRDPNQGGKDITEEIMSGA) form a PABPC1-binding region. The segment covering 208-220 (RTASTPTPPQTGG) has biased composition (polar residues). Position 214 is a phosphothreonine (T214). S230 bears the Phosphoserine mark. Over residues 269-280 (SPSPTPSPPPIL) the composition is skewed to pro residues. Phosphoserine is present on S324. Low complexity predominate over residues 438–449 (KVSSAALASILS). The segment covering 463 to 479 (QEEEMEEDDDDEEGGEA) has biased composition (acidic residues). Residues 551–562 (QPPTGSNPSPES) are compositionally biased toward polar residues. Basic and acidic residues-rich tracts occupy residues 578-587 (WDSKEDKIHN) and 596-606 (QKYEYKSDQWK). At K606 the chain carries N6-acetyllysine. The segment at 611 to 622 (EEKKRYDREFLL) is EIF4E-binding. At T651 the chain carries Phosphothreonine. Disordered stretches follow at residues 667 to 719 (GPDF…TRKI) and 734 to 760 (AEKA…DGSK). The interval 686-1089 (GPPRGGPGGE…GSIDSNNQLF (404 aa)) is eIF3/EIF4A-binding. An omega-N-methylarginine mark is found at R689 and R698. Positions 697–707 (PRGPAGLGPRR) are enriched in low complexity. Basic and acidic residues predominate over residues 745–760 (TAADKDRGEEDADGSK). One can recognise an MIF4G domain in the interval 765-993 (FRRVRSILNK…QDVLDLRQSN (229 aa)). Disordered regions lie at residues 1029 to 1117 (AKGS…SEAT) and 1129 to 1238 (QQTL…AALS). Position 1032 is a phosphoserine (S1032). Residues R1036 and R1046 each carry the omega-N-methylarginine modification. 2 positions are modified to phosphoserine: S1081 and S1096. K1099 carries the post-translational modification N6-acetyllysine. 2 positions are modified to phosphoserine: S1147 and S1149. Basic and acidic residues predominate over residues 1148 to 1180 (LSRERGEKAGDRGDRLERSERGGDRGDRLDRAR). S1187 is modified (phosphoserine; by PKC/PRKCA). The segment covering 1188 to 1225 (FSKEVEERSRERPSQPEGLRKAASLTEDRGRDPVKREA) has biased composition (basic and acidic residues). 3 positions are modified to phosphoserine: S1189, S1196, and S1211. Residue T1213 is modified to Phosphothreonine. 2 positions are modified to phosphoserine: S1231 and S1238. In terms of domain architecture, MI spans 1241-1363 (EVEKKSKAII…PMGELFREIT (123 aa)). Residues 1429 to 1599 (ESEAPGQRTL…REAEDEESDH (171 aa)) form the W2 domain. Positions 1450-1600 (LLKDGGSNQR…EAEDEESDHN (151 aa)) are EIF4A-binding. Residues 1585–1600 (FFNWLREAEDEESDHN) form a necessary but not sufficient for MKNK1-binding region. The residue at position 1597 (S1597) is a Phosphoserine.

Belongs to the eukaryotic initiation factor 4G family. In terms of assembly, eIF4F is a multi-subunit complex, the composition of which varies with external and internal environmental conditions. It is composed of at least EIF4A, EIF4E (cap-binding) and EIF4G1/EIF4G3. Interacts with eIF3 complex, mutually exclusive with EIF4A1 or EIF4A2, EIF4E and through its N-terminus with PABPC1. Interacts with EIF4E or with EIF1 (mutually exclusive) through a common binding site. Interacts through its C-terminus with the serine/threonine kinases MKNK1, and with MKNK2. Appears to act as a scaffold protein, holding these enzymes in place to phosphorylate EIF4E. Non-phosphorylated EIF4EBP1 competes with EIF4G1/EIF4G3 to interact with EIF4E; insulin stimulated MAP-kinase (MAPK1 and MAPK3) phosphorylation of EIF4EBP1 causes dissociation of the complex allowing EIF4G1/EIF4G3 to bind and consequent initiation of translation. EIF4G1/EIF4G3 interacts with PABPC1 to bring about circularization of the mRNA. Interacts with EIF4E3. Interacts with CIRBP and MIF4GD. Interacts with RBM4. Interacts with HNRNPD/AUF1; the interaction requires RNA. Interacts with DDX3X; the interaction requires RNA. Interacts with DAZAP2. As to quaternary structure, (Microbial infection) Interacts with murine norovirus viral genome-linked protein (via C-terminus); this interaction plays a role in translation of viral proteins. Phosphorylated at multiple sites in vivo. Phosphorylation at Ser-1187 by PRKCA induces binding to MKNK1.

Its subcellular location is the cytoplasm. It localises to the nucleus. The protein localises to the stress granule. In terms of biological role, component of the protein complex eIF4F, which is involved in the recognition of the mRNA cap, ATP-dependent unwinding of 5'-terminal secondary structure and recruitment of mRNA to the ribosome. Exists in two complexes, either with EIF1 or with EIF4E (mutually exclusive). Together with EIF1, is required for leaky scanning, in particular for avoiding cap-proximal start codon. Together with EIF4E, antagonizes the scanning promoted by EIF1-EIF4G1 and locates the start codon (through a TISU element) without scanning. As a member of the eIF4F complex, required for endoplasmic reticulum stress-induced ATF4 mRNA translation. The polypeptide is Eukaryotic translation initiation factor 4 gamma 1 (Eif4g1) (Mus musculus (Mouse)).